Consider the following 681-residue polypeptide: DNA ligase (681 aa).

Residues 35–39, 84–85, and Glu121 contribute to the NAD(+) site; these read DAEYD and SI. The active-site N6-AMP-lysine intermediate is Lys123. Arg144, Glu180, Lys300, and Lys324 together coordinate NAD(+). Positions 418, 421, 436, and 442 each coordinate Zn(2+). Positions 601–681 constitute a BRCT domain; it reads AADGPASGKT…GLRRLLEQPA (81 aa).

Belongs to the NAD-dependent DNA ligase family. LigA subfamily. It depends on Mg(2+) as a cofactor. The cofactor is Mn(2+).

It carries out the reaction NAD(+) + (deoxyribonucleotide)n-3'-hydroxyl + 5'-phospho-(deoxyribonucleotide)m = (deoxyribonucleotide)n+m + AMP + beta-nicotinamide D-nucleotide.. Its function is as follows. DNA ligase that catalyzes the formation of phosphodiester linkages between 5'-phosphoryl and 3'-hydroxyl groups in double-stranded DNA using NAD as a coenzyme and as the energy source for the reaction. It is essential for DNA replication and repair of damaged DNA. The chain is DNA ligase from Aromatoleum aromaticum (strain DSM 19018 / LMG 30748 / EbN1) (Azoarcus sp. (strain EbN1)).